The chain runs to 668 residues: BTB/POZ domain-containing protein At5g66560 (668 aa).

The BTB domain maps to 21–133 (SDIEIEVDDM…CYGVKMDLSA (113 aa)). Basic and acidic residues predominate over residues 73–84 (ETDKKGKGHEIE). The disordered stretch occupies residues 73 to 98 (ETDKKGKGHEIEDDKEEEEVEEQEIE). Residues 85-98 (DDKEEEEVEEQEIE) are compositionally biased toward acidic residues. In terms of domain architecture, NPH3 spans 254 to 530 (ELWFEDLTQL…VQVLFFEQLQ (277 aa)). The residue at position 471 (tyrosine 471) is a Phosphotyrosine.

The protein belongs to the NPH3 family.

Its pathway is protein modification; protein ubiquitination. May act as a substrate-specific adapter of an E3 ubiquitin-protein ligase complex (CUL3-RBX1-BTB) which mediates the ubiquitination and subsequent proteasomal degradation of target proteins. The chain is BTB/POZ domain-containing protein At5g66560 from Arabidopsis thaliana (Mouse-ear cress).